The primary structure comprises 264 residues: 2-hydroxyhexa-2,4-dienoate hydratase (264 aa).

This sequence belongs to the hydratase/decarboxylase family.

It carries out the reaction (2Z,4Z)-2-hydroxyhexa-2,4-dienoate + H2O = 4-hydroxy-2-oxohexanoate. Involved in the catatabolism of testosterone. Catalyzes the hydration of 2-hydroxyhexa-2,4-dienoic acid to 4-hydroxy-2-oxohexanoic acid. The protein is 2-hydroxyhexa-2,4-dienoate hydratase (tesE) of Comamonas testosteroni (Pseudomonas testosteroni).